The chain runs to 686 residues: Glycine--tRNA ligase beta subunit (686 aa).

Belongs to the class-II aminoacyl-tRNA synthetase family. Tetramer of two alpha and two beta subunits.

The protein resides in the cytoplasm. The catalysed reaction is tRNA(Gly) + glycine + ATP = glycyl-tRNA(Gly) + AMP + diphosphate. This is Glycine--tRNA ligase beta subunit from Geobacter metallireducens (strain ATCC 53774 / DSM 7210 / GS-15).